We begin with the raw amino-acid sequence, 715 residues long: Glycine--tRNA ligase beta subunit (715 aa).

This sequence belongs to the class-II aminoacyl-tRNA synthetase family. Tetramer of two alpha and two beta subunits.

The protein resides in the cytoplasm. It carries out the reaction tRNA(Gly) + glycine + ATP = glycyl-tRNA(Gly) + AMP + diphosphate. This is Glycine--tRNA ligase beta subunit from Nitrosomonas eutropha (strain DSM 101675 / C91 / Nm57).